Reading from the N-terminus, the 260-residue chain is Phosphate import ATP-binding protein PstB 1 (260 aa).

The ABC transporter domain occupies 8–255 (TETKNVYDVL…PEHKRTEDYV (248 aa)). An ATP-binding site is contributed by 46–53 (GPSGCGKS).

It belongs to the ABC transporter superfamily. Phosphate importer (TC 3.A.1.7) family. In terms of assembly, the complex is composed of two ATP-binding proteins (PstB), two transmembrane proteins (PstC and PstA) and a solute-binding protein (PstS).

It localises to the cell membrane. It catalyses the reaction phosphate(out) + ATP + H2O = ADP + 2 phosphate(in) + H(+). Functionally, part of the ABC transporter complex PstSACB involved in phosphate import. Responsible for energy coupling to the transport system. This is Phosphate import ATP-binding protein PstB 1 from Shouchella clausii (strain KSM-K16) (Alkalihalobacillus clausii).